We begin with the raw amino-acid sequence, 278 residues long: MGRKVHPIGFRLGIIKDWSAKWHASDKNFAECLTEDLKLRKAISKKYVDAAISQVDIERQSNKVTVSVRTARPGIVIGRGGQRVDEMRHFLEDLIGKKVQLNIVEISQAELDAFLVARSVAEQIERRVAYRRAMKQAIFRSMQAGAKGIKICASGRLGGVEIARREVMHEGRVPLHTLRADIDYGCTRAHTALGDVGIKVWVYRGDILPEAKEKSESAVTEMAAVMADAPAAVVTETKVADIAAKPKRVVKKAEAEIPAEEKPKRVVKKAENITKEEE.

One can recognise a KH type-2 domain in the interval 39 to 107 (LRKAISKKYV…KVQLNIVEIS (69 aa)). The disordered stretch occupies residues 255–278 (AEIPAEEKPKRVVKKAENITKEEE).

The protein belongs to the universal ribosomal protein uS3 family. As to quaternary structure, part of the 30S ribosomal subunit. Forms a tight complex with proteins S10 and S14.

Its function is as follows. Binds the lower part of the 30S subunit head. Binds mRNA in the 70S ribosome, positioning it for translation. The polypeptide is Small ribosomal subunit protein uS3 (Dehalococcoides mccartyi (strain ATCC BAA-2100 / JCM 16839 / KCTC 5957 / BAV1)).